Consider the following 196-residue polypeptide: Lipoprotein signal peptidase (196 aa).

The next 2 membrane-spanning stretches (helical) occupy residues I75–S95 and T97–D117. Active-site residues include D126 and D144. The chain crosses the membrane as a helical span at residues Y135–V155.

The protein belongs to the peptidase A8 family.

It localises to the cell inner membrane. It catalyses the reaction Release of signal peptides from bacterial membrane prolipoproteins. Hydrolyzes -Xaa-Yaa-Zaa-|-(S,diacylglyceryl)Cys-, in which Xaa is hydrophobic (preferably Leu), and Yaa (Ala or Ser) and Zaa (Gly or Ala) have small, neutral side chains.. It participates in protein modification; lipoprotein biosynthesis (signal peptide cleavage). Its function is as follows. This protein specifically catalyzes the removal of signal peptides from prolipoproteins. This is Lipoprotein signal peptidase from Rickettsia bellii (strain OSU 85-389).